The primary structure comprises 613 residues: AP-5 complex subunit mu (613 aa).

The 255-residue stretch at 309–563 (KQRLLFTIHE…DYAKVSFKIV (255 aa)) folds into the MHD domain. The tract at residues 501–522 (SPLQSRRKGDGDDEESEDESAE) is disordered. Over residues 511 to 521 (GDDEESEDESA) the composition is skewed to acidic residues.

Belongs to the adaptor complexes medium subunit family. Probably part of the adaptor protein complex 5 (AP-5).

The protein localises to the cytoplasmic vesicle membrane. This is AP-5 complex subunit mu (AP5M) from Arabidopsis thaliana (Mouse-ear cress).